The following is a 131-amino-acid chain: Small ribosomal subunit protein uS8 (131 aa).

This sequence belongs to the universal ribosomal protein uS8 family. As to quaternary structure, part of the 30S ribosomal subunit. Contacts proteins S5 and S12.

In terms of biological role, one of the primary rRNA binding proteins, it binds directly to 16S rRNA central domain where it helps coordinate assembly of the platform of the 30S subunit. This Burkholderia lata (strain ATCC 17760 / DSM 23089 / LMG 22485 / NCIMB 9086 / R18194 / 383) protein is Small ribosomal subunit protein uS8.